A 112-amino-acid polypeptide reads, in one-letter code: Gastrula zinc finger protein XlCGF16.1 (112 aa).

4 C2H2-type zinc fingers span residues 6–28, 34–56, 62–84, and 90–112; these read YNCSECHKRFRSKSGFVKHQKTH, FVCFVCEQRFVCHSALIGHQRIH, FSCTECGKCFSRRSHLNSHHKTH, and FLCFACGKCFASRSHLTAHHRTH.

It belongs to the krueppel C2H2-type zinc-finger protein family.

It is found in the nucleus. In terms of biological role, may be involved in transcriptional regulation. This chain is Gastrula zinc finger protein XlCGF16.1, found in Xenopus laevis (African clawed frog).